The sequence spans 230 residues: NAD(P)H-hydrate epimerase (230 aa).

The region spanning 11 to 223 (YAAADIRAAE…DVGLDLSGAT (213 aa)) is the YjeF N-terminal domain. 59 to 63 (NNGGD) contacts (6S)-NADPHX. 2 residues coordinate K(+): Asn60 and Asp125. (6S)-NADPHX contacts are provided by residues 129-137 (GIGTTDSPA) and Asp165. Ser168 serves as a coordination point for K(+).

This sequence belongs to the NnrE/AIBP family. K(+) is required as a cofactor.

The catalysed reaction is (6R)-NADHX = (6S)-NADHX. The enzyme catalyses (6R)-NADPHX = (6S)-NADPHX. Its function is as follows. Catalyzes the epimerization of the S- and R-forms of NAD(P)HX, a damaged form of NAD(P)H that is a result of enzymatic or heat-dependent hydration. This is a prerequisite for the S-specific NAD(P)H-hydrate dehydratase to allow the repair of both epimers of NAD(P)HX. The polypeptide is NAD(P)H-hydrate epimerase (Clavibacter michiganensis subsp. michiganensis (strain NCPPB 382)).